The following is a 118-amino-acid chain: Small ribosomal subunit protein uS13 (118 aa).

Residues 97-118 are disordered; sequence VRGQRTKTNARTCKGPRKAIKK.

This sequence belongs to the universal ribosomal protein uS13 family. As to quaternary structure, part of the 30S ribosomal subunit. Forms a loose heterodimer with protein S19. Forms two bridges to the 50S subunit in the 70S ribosome.

In terms of biological role, located at the top of the head of the 30S subunit, it contacts several helices of the 16S rRNA. In the 70S ribosome it contacts the 23S rRNA (bridge B1a) and protein L5 of the 50S subunit (bridge B1b), connecting the 2 subunits; these bridges are implicated in subunit movement. Contacts the tRNAs in the A and P-sites. The polypeptide is Small ribosomal subunit protein uS13 (Buchnera aphidicola subsp. Schizaphis graminum (strain Sg)).